Reading from the N-terminus, the 353-residue chain is ATPase GET3A (353 aa).

An ATP-binding site is contributed by 27 to 34 (KGGVGKTT). Asp56 is an active-site residue. Positions 226 and 253 each coordinate ATP. Residues 320–353 (TTSRSNVEELERKVHTLRLQLKTAEEELERVKSG) are a coiled coil.

Belongs to the arsA ATPase family. In terms of assembly, homodimer. Interacts with GET1 and GET4.

It localises to the cytoplasm. The protein resides in the cytosol. Its subcellular location is the endoplasmic reticulum. The enzyme catalyses ATP + H2O = ADP + phosphate + H(+). Functionally, ATPase required for the post-translational delivery of tail-anchored (TA) proteins to the endoplasmic reticulum. Recognizes and selectively binds the transmembrane domain of TA proteins in the cytosol. This complex then targets to the endoplasmic reticulum by membrane-bound receptors, where the tail-anchored protein is released for insertion. This process is regulated by ATP binding and hydrolysis. ATP binding drives the homodimer towards the closed dimer state, facilitating recognition of newly synthesized TA membrane proteins. ATP hydrolysis is required for insertion. Subsequently, the homodimer reverts towards the open dimer state, lowering its affinity for the membrane-bound receptor, and returning it to the cytosol to initiate a new round of targeting. Involved in the control of root hair growth through the regulation of syntaxin SYP123 expression. In Arabidopsis thaliana (Mouse-ear cress), this protein is ATPase GET3A.